Here is a 476-residue protein sequence, read N- to C-terminus: MKPVLPDYSKAGVLIVGDVMLDRYWYGPTGRISPEAPVPVVKVEQSEERPGGAANVAMNIASLGGHAHIIGLTGQDEPANVLANKLTSLKVHCDFVALPDYPTITKLRVLSRGQQLIRLDFEDKFENTDAQLILSRMESALPKVRAVILSDYAKGALEHVQQFIQKAKAAGVPVFIDPKGSDFERYRGASLLTPNMSEFEAVVGKVKSEQELVEKGFALIEKFDLGALLVTRSEHGMTLLRRGLEPFHLPTQAKEVYDVTGAGDTVISVLAASVAAGKALDEACALANAAAGVVVGKLGTSTVSTIELAEAVHGSKDTDYGVISEDALIEAVKKAQARGEKVVMTNGCFDILHAGHVSYLNHAAELGDRLIVAVNTDESVKRLKGPGRPVNSTDRRMAVLAGLGAVDWVVPFSEDTPQRLIAAILPNLLVKGGDYKPEEIAGGKEVIAAGGEVKVLNFEEGCSTTEIIEAIKGGRG.

Positions 1–318 are ribokinase; that stretch reads MKPVLPDYSK…AEAVHGSKDT (318 aa). Residue 195 to 198 coordinates ATP; the sequence is NMSE. The active site involves Asp-264. The interval 344–476 is cytidylyltransferase; that stretch reads MTNGCFDILH…IIEAIKGGRG (133 aa).

This sequence in the N-terminal section; belongs to the carbohydrate kinase PfkB family. In the C-terminal section; belongs to the cytidylyltransferase family. In terms of assembly, homodimer.

The catalysed reaction is D-glycero-beta-D-manno-heptose 7-phosphate + ATP = D-glycero-beta-D-manno-heptose 1,7-bisphosphate + ADP + H(+). It catalyses the reaction D-glycero-beta-D-manno-heptose 1-phosphate + ATP + H(+) = ADP-D-glycero-beta-D-manno-heptose + diphosphate. Its pathway is nucleotide-sugar biosynthesis; ADP-L-glycero-beta-D-manno-heptose biosynthesis; ADP-L-glycero-beta-D-manno-heptose from D-glycero-beta-D-manno-heptose 7-phosphate: step 1/4. The protein operates within nucleotide-sugar biosynthesis; ADP-L-glycero-beta-D-manno-heptose biosynthesis; ADP-L-glycero-beta-D-manno-heptose from D-glycero-beta-D-manno-heptose 7-phosphate: step 3/4. In terms of biological role, catalyzes the phosphorylation of D-glycero-D-manno-heptose 7-phosphate at the C-1 position to selectively form D-glycero-beta-D-manno-heptose-1,7-bisphosphate. Its function is as follows. Catalyzes the ADP transfer from ATP to D-glycero-beta-D-manno-heptose 1-phosphate, yielding ADP-D-glycero-beta-D-manno-heptose. This is Bifunctional protein HldE from Vibrio cholerae serotype O1 (strain ATCC 39541 / Classical Ogawa 395 / O395).